Here is a 396-residue protein sequence, read N- to C-terminus: Putative pyridoxal phosphate-dependent acyltransferase (396 aa).

A pyridoxal 5'-phosphate-binding site is contributed by 111-112 (GF). His-136 is a substrate binding site. Pyridoxal 5'-phosphate is bound by residues Ser-186, 211 to 214 (DDAH), and 241 to 244 (TLSK). Lys-244 carries the post-translational modification N6-(pyridoxal phosphate)lysine. Position 358 (Thr-358) interacts with substrate.

The protein belongs to the class-II pyridoxal-phosphate-dependent aminotransferase family. As to quaternary structure, homodimer. Pyridoxal 5'-phosphate serves as cofactor.

In Bacillus cereus (strain ATCC 14579 / DSM 31 / CCUG 7414 / JCM 2152 / NBRC 15305 / NCIMB 9373 / NCTC 2599 / NRRL B-3711), this protein is Putative pyridoxal phosphate-dependent acyltransferase.